The following is a 237-amino-acid chain: Phosphoribosylaminoimidazole-succinocarboxamide synthase (237 aa).

The protein belongs to the SAICAR synthetase family.

It catalyses the reaction 5-amino-1-(5-phospho-D-ribosyl)imidazole-4-carboxylate + L-aspartate + ATP = (2S)-2-[5-amino-1-(5-phospho-beta-D-ribosyl)imidazole-4-carboxamido]succinate + ADP + phosphate + 2 H(+). It participates in purine metabolism; IMP biosynthesis via de novo pathway; 5-amino-1-(5-phospho-D-ribosyl)imidazole-4-carboxamide from 5-amino-1-(5-phospho-D-ribosyl)imidazole-4-carboxylate: step 1/2. This is Phosphoribosylaminoimidazole-succinocarboxamide synthase from Halalkalibacterium halodurans (strain ATCC BAA-125 / DSM 18197 / FERM 7344 / JCM 9153 / C-125) (Bacillus halodurans).